A 290-amino-acid chain; its full sequence is D-tagatose-1,6-bisphosphate aldolase subunit KbaY (290 aa).

Residue Asp82 is the Proton donor of the active site. The Zn(2+) site is built by His83 and His180. Gly181 is a dihydroxyacetone phosphate binding site. Position 208 (His208) interacts with Zn(2+). Residues 209–211 and 230–233 contribute to the dihydroxyacetone phosphate site; these read GAS and NVAT.

This sequence belongs to the class II fructose-bisphosphate aldolase family. TagBP aldolase KbaY subfamily. In terms of assembly, homotetramer. Forms a complex with KbaZ. It depends on Zn(2+) as a cofactor.

It catalyses the reaction D-tagatofuranose 1,6-bisphosphate = D-glyceraldehyde 3-phosphate + dihydroxyacetone phosphate. It functions in the pathway carbohydrate metabolism; D-tagatose 6-phosphate degradation; D-glyceraldehyde 3-phosphate and glycerone phosphate from D-tagatose 6-phosphate: step 2/2. Catalytic subunit of the tagatose-1,6-bisphosphate aldolase KbaYZ, which catalyzes the reversible aldol condensation of dihydroxyacetone phosphate (DHAP or glycerone-phosphate) with glyceraldehyde 3-phosphate (G3P) to produce tagatose 1,6-bisphosphate (TBP). Requires KbaZ subunit for full activity and stability. In Salmonella arizonae (strain ATCC BAA-731 / CDC346-86 / RSK2980), this protein is D-tagatose-1,6-bisphosphate aldolase subunit KbaY.